The sequence spans 227 residues: 7-cyano-7-deazaguanine synthase (227 aa).

Residue 11 to 21 (VSGGMDSAALL) coordinates ATP. Cysteine 192, cysteine 200, cysteine 203, and cysteine 206 together coordinate Zn(2+).

Belongs to the QueC family. Zn(2+) serves as cofactor.

The catalysed reaction is 7-carboxy-7-deazaguanine + NH4(+) + ATP = 7-cyano-7-deazaguanine + ADP + phosphate + H2O + H(+). It functions in the pathway purine metabolism; 7-cyano-7-deazaguanine biosynthesis. Its function is as follows. Catalyzes the ATP-dependent conversion of 7-carboxy-7-deazaguanine (CDG) to 7-cyano-7-deazaguanine (preQ(0)). The sequence is that of 7-cyano-7-deazaguanine synthase from Persephonella marina (strain DSM 14350 / EX-H1).